Consider the following 508-residue polypeptide: Maturase K (508 aa).

Belongs to the intron maturase 2 family. MatK subfamily.

It localises to the plastid. The protein localises to the chloroplast. Its function is as follows. Usually encoded in the trnK tRNA gene intron. Probably assists in splicing its own and other chloroplast group II introns. This chain is Maturase K, found in Manilkara zapota (Sapodilla plum).